The sequence spans 74 residues: Antimicrobial peptide 36.4 (74 aa).

An N-terminal signal peptide occupies residues 1 to 22 (MKVNVLLAVFLVVMVVTDHCHA). The residue at position 39 (lysine 39) is a Lysine amide. A propeptide spanning residues 44-74 (LQMEARFQPQNKNYRKRELDLENLFTHMPDY) is cleaved from the precursor.

Belongs to the non-disulfide-bridged peptide (NDBP) superfamily. Short antimicrobial peptide (group 4) family. Expressed by the venom gland.

Its subcellular location is the secreted. It is found in the target cell membrane. Its function is as follows. Cationic host defense peptide that have antibacterial activity by breaking membranes. Is more effective on Gram-positive than on Gram-negative bacteria. In Lychas mucronatus (Chinese swimming scorpion), this protein is Antimicrobial peptide 36.4.